A 932-amino-acid polypeptide reads, in one-letter code: Beta-mannosidase A (932 aa).

The first 21 residues, Met-1–Gly-21, serve as a signal peptide directing secretion. N-linked (GlcNAc...) asparagine glycans are attached at residues Asn-40, Asn-248, Asn-283, Asn-317, and Asn-348. Residue Glu-480 is the Proton donor of the active site. 7 N-linked (GlcNAc...) asparagine glycosylation sites follow: Asn-538, Asn-609, Asn-632, Asn-659, Asn-739, Asn-762, and Asn-791.

It belongs to the glycosyl hydrolase 2 family. Beta-mannosidase A subfamily. As to quaternary structure, homodimer.

It is found in the secreted. The catalysed reaction is Hydrolysis of terminal, non-reducing beta-D-mannose residues in beta-D-mannosides.. The protein operates within glycan metabolism; N-glycan degradation. Its function is as follows. Exoglycosidase that cleaves the single beta-linked mannose residue from the non-reducing end of beta-mannosidic oligosaccharides of various complexity and length. Involved in the degradation of polymeric mannan and galactomannan. This chain is Beta-mannosidase A (mndA), found in Aspergillus clavatus (strain ATCC 1007 / CBS 513.65 / DSM 816 / NCTC 3887 / NRRL 1 / QM 1276 / 107).